The sequence spans 637 residues: Protein RRP6-like 1 (637 aa).

In terms of domain architecture, 3'-5' exonuclease spans 118-283 (VEEVKDLEDL…YIYDVMRMEL (166 aa)). An HRDC domain is found at 334-414 (NAVQLSIVAG…RRSMQNAAAF (81 aa)). Positions 553–565 (VDDDDDDDDDESY) are enriched in acidic residues. A disordered region spans residues 553-624 (VDDDDDDDDD…EDMRRRSEKH (72 aa)). A compositionally biased stretch (polar residues) spans 580 to 598 (ETPSKGSPSLTQKPKTCNT). Residues 602-614 (VLDDDDDSESRED) show a composition bias toward acidic residues.

Its subcellular location is the nucleus. The protein localises to the nucleoplasm. Acts as an important epigenetic regulator through multiple silencing mechanisms. Involved in transcriptional gene silencing (TGS). Plays a role for DNA methylation in the RNA-directed DNA methylation (RdDM) pathway. Contributes to the methylation status of the retrotransposon SN1. Required for DNA methylation only at a subset of RdDM target loci. Plays a regulatory role in RdDM through retention of non-coding RNAs (ncRNAs) in normal cells. Helps to retain Pol V-transcribed RNAs in chromatin to enable their scaffold function and is required for genome-wide Pol IV-dependent siRNA (24 nt siRNA) production that may involve retention of Pol IV transcripts. Involved in association with RRP6L2 in the silencing of the solo LTR locus. Controls levels of ncRNAs from the solo LTR locus. Seems to function independently of the RdDM pathway. Functions redundantly with RRP6L2 in the regulation of FLC locus. Participates in the maintenance of trimethylated 'Lys-27' (H3K27me3) at FLC locus via the regulation of antisense long non-coding RNAs (lncRNAs) and the regulation of diverse antisense RNAs derived from the FLC locus. Seems not involved in the exosomal RNA degradation. Can complement the growth defect of a yeast mutant lacking RRP6 exonuclease. In Arabidopsis thaliana (Mouse-ear cress), this protein is Protein RRP6-like 1.